The primary structure comprises 576 residues: K(+)/H(+) antiporter NhaP2 (576 aa).

The next 13 membrane-spanning stretches (helical) occupy residues 6 to 26, 34 to 54, 58 to 78, 87 to 107, 109 to 129, 163 to 183, 185 to 205, 219 to 239, 242 to 262, 271 to 291, 299 to 319, 335 to 355, and 359 to 379; these read INSFFLIGALLTAVSVLLSPM, ILLIFLAVGILAGEDGPGGIL, YSTAYLVSNLALAIILLDGGM, VALWPALSLATFGVAITTSIT, MMAAWLFDLHWLQGLLVGAIV, PMAVFLTVTLIAILANVDTEM, FSFMFISFIKQFGLGICLGLG, LADGLYSILVLSGGLIIYAAS, LGGSGILSIYLVGLFLGNKPT, VLDGMTWVSQIGMFLVLGLLL, ILIPGFALAFGMILFARPVAV, WFISWVGLRGAVPIILAVFPM, and LPGAQLYFNLAFFVVLVSLLV. An RCK C-terminal domain is found at 405–486; that stretch reads SGVEIYPSSE…LEALSNLFSQ (82 aa).

The protein belongs to the monovalent cation:proton antiporter 1 (CPA1) transporter (TC 2.A.36) family. NhaP2 subfamily.

Its subcellular location is the cell inner membrane. It catalyses the reaction K(+)(in) + H(+)(out) = K(+)(out) + H(+)(in). Functionally, k(+)/H(+) antiporter that extrudes potassium in exchange for external protons and maintains the internal concentration of potassium under toxic levels. This chain is K(+)/H(+) antiporter NhaP2, found in Shewanella baltica (strain OS155 / ATCC BAA-1091).